We begin with the raw amino-acid sequence, 284 residues long: L-ribulose-5-phosphate 3-epimerase UlaE (284 aa).

Belongs to the L-ribulose-5-phosphate 3-epimerase family.

The enzyme catalyses L-ribulose 5-phosphate = L-xylulose 5-phosphate. The protein operates within cofactor degradation; L-ascorbate degradation; D-xylulose 5-phosphate from L-ascorbate: step 3/4. Functionally, catalyzes the isomerization of L-xylulose-5-phosphate to L-ribulose-5-phosphate. Is involved in the anaerobic L-ascorbate utilization. This chain is L-ribulose-5-phosphate 3-epimerase UlaE, found in Shigella sonnei (strain Ss046).